The chain runs to 864 residues: Calphotin (864 aa).

The leucine-zipper stretch occupies residues 816–858 (LQTTDVSLLAIAATLDAIGEKLKDQKARNQQVMDRLCEIEKIL).

In terms of assembly, homodimer. In terms of tissue distribution, soma and axons of photoreceptor cells of compound eyes and ocelli.

The protein localises to the cytoplasm. Plays important roles in both rhabdomere development and in photoreceptor cell survival. Might function as a calcium-sequestering 'sponge' to regulate the amount of free cytoplasmic calcium. It binds 0.3 mole of Ca(2+) per mole of protein. The sequence is that of Calphotin (Cpn) from Drosophila melanogaster (Fruit fly).